A 374-amino-acid polypeptide reads, in one-letter code: Alanine racemase (374 aa).

The Proton acceptor; specific for D-alanine role is filled by Lys-40. Lys-40 is modified (N6-(pyridoxal phosphate)lysine). Arg-136 is a binding site for substrate. Catalysis depends on Tyr-264, which acts as the Proton acceptor; specific for L-alanine. A substrate-binding site is contributed by Met-311.

This sequence belongs to the alanine racemase family. Pyridoxal 5'-phosphate serves as cofactor.

The catalysed reaction is L-alanine = D-alanine. Its pathway is amino-acid biosynthesis; D-alanine biosynthesis; D-alanine from L-alanine: step 1/1. In terms of biological role, catalyzes the interconversion of L-alanine and D-alanine. May also act on other amino acids. The sequence is that of Alanine racemase (alr) from Pediococcus pentosaceus (strain ATCC 25745 / CCUG 21536 / LMG 10740 / 183-1w).